The following is a 453-amino-acid chain: MSQSPKVGFVSLGCPKALVDSEQIITQLRAEGYEISGTYDGADLVVVNTCGFIDEAVQESLDAIGEALTENGKVIVTGCLGAKSSASGSNLIEEVHPKVLAVTGPHAVGEVMQAVHSHLPKPHDPFVDLVPAAGIKLTPRHYAYLKISEGCNHRCTFCIIPSMRGDLVSRPVAEVMLEAENLFKSGVKELLVISQDTSAYGVDVKYRTGFWNGKPIKTRMTDLVAALGELAAQYGAWVRLHYVYPYPSVDEVIPLMAEGPFKGHVLPYLDVPFQHAHPEVLKRMKRPANAEKVLERVQKWREICPDLTIRSTFIAGFPGETEEQFETLLDFVREAELDRVGCFAYSPVEGATANDLDGALPDEVREERRARFMEVAEEVSAHRMQRKVGKTLKVLIDEVGEEGGIGRTAADAPEIDGVVYVEPAAKASKRYKVGDFVSVKITGADGHDLWGEV.

One can recognise an MTTase N-terminal domain in the interval 5-120; sequence PKVGFVSLGC…VMQAVHSHLP (116 aa). Positions 14, 50, 79, 151, 155, and 158 each coordinate [4Fe-4S] cluster. A Radical SAM core domain is found at 137 to 383; it reads LTPRHYAYLK…EVAEEVSAHR (247 aa). A TRAM domain is found at 385-453; it reads QRKVGKTLKV…ADGHDLWGEV (69 aa).

The protein belongs to the methylthiotransferase family. RimO subfamily. [4Fe-4S] cluster is required as a cofactor.

Its subcellular location is the cytoplasm. It catalyses the reaction L-aspartate(89)-[ribosomal protein uS12]-hydrogen + (sulfur carrier)-SH + AH2 + 2 S-adenosyl-L-methionine = 3-methylsulfanyl-L-aspartate(89)-[ribosomal protein uS12]-hydrogen + (sulfur carrier)-H + 5'-deoxyadenosine + L-methionine + A + S-adenosyl-L-homocysteine + 2 H(+). In terms of biological role, catalyzes the methylthiolation of an aspartic acid residue of ribosomal protein uS12. The polypeptide is Ribosomal protein uS12 methylthiotransferase RimO (Burkholderia cenocepacia (strain ATCC BAA-245 / DSM 16553 / LMG 16656 / NCTC 13227 / J2315 / CF5610) (Burkholderia cepacia (strain J2315))).